Reading from the N-terminus, the 2748-residue chain is Chalcone synthase cfoA (2748 aa).

Residues 13–511 form an adenylation (A) domain region; the sequence is RHAGESCEKV…DTVPRTVIGK (499 aa). Residues 535–620 form the Carrier 1 domain; sequence DLIEALVMAE…AVSTYLHGRL (86 aa). Ser-579 is subject to O-(pantetheine 4'-phosphoryl)serine. In terms of domain architecture, Ketosynthase family 3 (KS3) spans 641–1073; it reads VEPIAIVSMA…GTNSHIILEQ (433 aa). Catalysis depends on for beta-ketoacyl synthase activity residues Cys-813, His-948, and His-995. The Malonyl-CoA:ACP transacylase (MAT) domain maps to 1196–1489; the sequence is FSGQGSWMPT…ATHGTVDKLL (294 aa). A dehydratase (DH) domain region spans residues 1561 to 1842; it reads LGHEMIFNAT…ENSFSMTMTD (282 aa). An N-terminal hotdog fold region spans residues 1563-1707; the sequence is HEMIFNATSI…GTFQLISQPN (145 aa). Positions 1563–1866 constitute a PKS/mFAS DH domain; that stretch reads HEMIFNATSI…LRTWQPTVAG (304 aa). His-1595 serves as the catalytic Proton acceptor; for dehydratase activity. A C-terminal hotdog fold region spans residues 1722–1866; it reads AESDVNISEA…LRTWQPTVAG (145 aa). Asp-1784 acts as the Proton donor; for dehydratase activity in catalysis. The Ketoreductase (KR) domain occupies 2031–2210; sequence GTVLITGGTG…ALSLAWGPWA (180 aa). The region spanning 2305-2383 is the Carrier 2 domain; that stretch reads NRHDTLLGLV…ALVEYLLPRI (79 aa). The residue at position 2342 (Ser-2342) is an O-(pantetheine 4'-phosphoryl)serine. Residues 2386–2426 form a disordered region; that stretch reads EPQPEVDTDSDASTTAGDTSVSRDSGKEDELSPSSSVTTLA. Low complexity predominate over residues 2396 to 2407; the sequence is DASTTAGDTSVS. Residues 2519–2742 are thioester reductase (TE) domain; the sequence is VGLSVYSNLA…GAAGEIERWA (224 aa).

This sequence in the N-terminal section; belongs to the NRP synthetase family. Pantetheine 4'-phosphate serves as cofactor.

It participates in secondary metabolite biosynthesis; flavonoid biosynthesis. Its function is as follows. Hybrid PKS-NRPS synthetase; part of the gene cluster that mediates the biosynthesis of chlorflavonin, a fungal flavonoid with acetolactate synthase inhibitory activity. Within the pathway, the PKS-NRPS cfoA, is responsible for the generation of the key precursor chalcone. The adenylation (A) domain activates benzoic acid or p-hydroxybenzoic acid which are transferred to the thiol group of the pantetheinyl residue of the T domain, and further transferred to the adjacent PKS portion of cfoA. Within the PKS portion of cfoA, benzoic acid or p-hydroxybenzoic acid act as starter units for respectively four malonyl-CoA molecules for elongation by the AT and KS domains. Afterwards, chalcone is cyclized through Claisen condensation and thereby released either spontaneously or catalyzed by the TE domain. Then, a new type of chalcone isomerase, cfoK, catalyzes the conversion of the chalcone into a flavanone by a histidine-mediated oxa-Michael addition mechanism. The desaturation of flavanone to flavone is catalyzed by a new type of flavone synthase, the flavin mononucleotide (FMN)-dependent oxidoreductase cfoJ. Monooxygenases cfoF, cfoG, and P450 cfoH are responsible for the hydroxylation of the flavonoid skeleton at sites C3, C8, and C2', respectively. Like cfoF, the dehydratase cfoI plays also a role in the hydroxylation of position C3. Methyltransferases cfoB, cfoC, and cfoD then catalyze the methylation of C7-OH, C8-OH, and C3-OH, respectively. Finally, the monooxygenase cfoE is responsible for the chlorination of flavonoid at position C3'. The sequence is that of Chalcone synthase cfoA from Aspergillus candidus.